The following is a 490-amino-acid chain: Selenium-binding protein 1 (490 aa).

Alanine 2 bears the N-acetylalanine mark. Selenite is bound by residues cysteine 21 and cysteine 22.

It belongs to the selenium-binding protein family. In terms of assembly, interacts with GRXS14 and GRXS16. Interacts with DALL3. In terms of tissue distribution, expressed in seedlings, roots, leaves, stems and flowers.

Its function is as follows. Binds cadmium and mediates lower sensitivity to stress requiring glutathione (GSH) for tolerance (e.g. cadmium, selenate, and hydrogen peroxide excess). Probably helps to detoxify cadmium potentially through direct binding. Binds selenium, cadmium, zinc and nickel in vitro. This Arabidopsis thaliana (Mouse-ear cress) protein is Selenium-binding protein 1.